The chain runs to 783 residues: BMP/retinoic acid-inducible neural-specific protein 2 (783 aa).

A signal peptide spans 1-33; sequence MRWQCGTRFRGLRPAVAPWTALLALGLPGWVLA. The MACPF domain maps to 85–281; the sequence is RYRIYREFAR…FVAAALSYIT (197 aa). N-linked (GlcNAc...) asparagine glycosylation is found at asparagine 185, asparagine 354, asparagine 473, asparagine 579, asparagine 626, and asparagine 658.

The protein belongs to the BRINP family.

It is found in the secreted. In terms of biological role, inhibits neuronal cell proliferation by negative regulation of the cell cycle transition. This chain is BMP/retinoic acid-inducible neural-specific protein 2 (BRINP2), found in Homo sapiens (Human).